The following is a 243-amino-acid chain: Uridylate kinase (243 aa).

An ATP-binding site is contributed by 18–21; the sequence is KLGG. Position 59 (G59) interacts with UMP. Residues G60 and R64 each contribute to the ATP site. UMP is bound by residues D79 and 140–147; that span reads MGMPYFST. ATP is bound by residues Y173 and D176.

Belongs to the UMP kinase family. As to quaternary structure, homohexamer.

The protein resides in the cytoplasm. It carries out the reaction UMP + ATP = UDP + ADP. It functions in the pathway pyrimidine metabolism; CTP biosynthesis via de novo pathway; UDP from UMP (UMPK route): step 1/1. With respect to regulation, inhibited by UTP. Catalyzes the reversible phosphorylation of UMP to UDP. This chain is Uridylate kinase, found in Corynebacterium diphtheriae (strain ATCC 700971 / NCTC 13129 / Biotype gravis).